A 675-amino-acid chain; its full sequence is Electrogenic aspartate/glutamate antiporter SLC25A13, mitochondrial (675 aa).

At A2 the chain carries N-acetylalanine. The segment at 2 to 295 (AAAKVALTKR…TLADIERIAP (294 aa)) is regulatory N-terminal domain. The Mitochondrial intermembrane portion of the chain corresponds to 2–331 (AAAKVALTKR…LLQVAESAYR (330 aa)). EF-hand domains are found at residues 51-86 (SQPN…SVLC), 87-122 (APDA…TTIH), 125-157 (IPFN…FLLE), and 158-193 (IQLE…IRPH). Ca(2+) contacts are provided by D66, T68, D70, L72, and E77. A linker loop domain region spans residues 296-311 (LEEGTLPFNLAEAQRQ). The tract at residues 321–612 (VLLQVAESAY…LQRWFYIDFG (292 aa)) is carrier domain. 3 Solcar repeats span residues 326–418 (AESA…VRDK), 426–510 (VPLA…VKAS), and 518–606 (VSPG…LQRW). A helical transmembrane segment spans residues 332–349 (FGLGSVAGAVGATAVYPI). The Mitochondrial matrix segment spans residues 350-392 (DLVKTRMQNQRSTGSFVGELMYKNSFDCFKKVLRYEGFFGLYR). 2 positions are modified to N6-acetyllysine: K353 and K372. The chain crosses the membrane as a helical span at residues 393–412 (GLLPQLLGVAPEKAIKLTVN). Residues 413–435 (DFVRDKFMHKDGSVPLAAEILAG) are Mitochondrial intermembrane-facing. A helical transmembrane segment spans residues 436 to 449 (GCAGGSQVIFTNPL). Residues 450–484 (EIVKIRLQVAGEITTGPRVSALSVVRDLGFFGIYK) lie on the Mitochondrial matrix side of the membrane. K453 is subject to N6-methyllysine. K484 bears the N6-acetyllysine; alternate mark. K484 is modified (N6-succinyllysine; alternate). A helical membrane pass occupies residues 485–504 (GAKACFLRDIPFSAIYFPCY). The Mitochondrial intermembrane portion of the chain corresponds to 505–523 (AHVKASFANEDGQVSPGSL). Residues 524-541 (LLAGAIAGMPAASLVTPA) form a helical membrane-spanning segment. Topologically, residues 542–580 (DVIKTRLQVAARAGQTTYSGVIDCFRKILREEGPKALWK) are mitochondrial matrix. An N6-succinyllysine modification is found at K580. Residues 581 to 600 (GAGARVFRSSPQFGVTLLTY) form a helical membrane-spanning segment. Residues 601 to 675 (ELLQRWFYID…STSKAIGGGP (75 aa)) are Mitochondrial intermembrane-facing. Residues 613–675 (GVKPMGSEPV…STSKAIGGGP (63 aa)) form a C-terminal domain region. Residue K662 is modified to N6-acetyllysine. Phosphoserine is present on S666.

Belongs to the mitochondrial carrier (TC 2.A.29) family. Homodimer (via N-terminus). High levels in liver and low levels in kidney, pancreas, placenta, heart and brain.

The protein resides in the mitochondrion inner membrane. The catalysed reaction is L-aspartate(in) + L-glutamate(out) + H(+)(out) = L-aspartate(out) + L-glutamate(in) + H(+)(in). The enzyme catalyses 3-sulfino-L-alanine(out) + L-glutamate(in) + H(+)(in) = 3-sulfino-L-alanine(in) + L-glutamate(out) + H(+)(out). It catalyses the reaction 3-sulfino-L-alanine(out) + L-aspartate(in) = 3-sulfino-L-alanine(in) + L-aspartate(out). With respect to regulation, activated by calcium-binding in the mitochondrial intermembrane space. Inhibited by pyridoxal 5'-phosphate, bathophenathroline, mercurials, diethyl pyrocarbonate and N-ethylmaleimide. Mitochondrial electrogenic aspartate/glutamate antiporter that favors efflux of aspartate and entry of glutamate and proton within the mitochondria as part of the malate-aspartate shuttle. Also mediates the uptake of L-cysteinesulfinate (3-sulfino-L-alanine) by mitochondria in exchange of L-glutamate and proton. Can also exchange L-cysteinesulfinate with aspartate in their anionic form without any proton translocation. Lacks transport activity towards gamma-aminobutyric acid (GABA). This chain is Electrogenic aspartate/glutamate antiporter SLC25A13, mitochondrial, found in Homo sapiens (Human).